Here is a 218-residue protein sequence, read N- to C-terminus: MTAQTTPERRPDHLTLALPKGRIMDDAIALLSQAGLPLTRPEASRALRHEFPGVTVLELRNQDVPVYVDLGVADAGIVGKDVLLEAGRPVYEPVDLHFAECRLSLIREIGASGPIARVGTKYPRAARAYLQERGIPAEVVKLSGNIELAALTGLADAVIDLVQTGSTLRANHLEEVDVLFHSSARLIVNRTALKLRRERLRPLIARLRELTAPAGEES.

It belongs to the ATP phosphoribosyltransferase family. Short subfamily. Heteromultimer composed of HisG and HisZ subunits.

It localises to the cytoplasm. The catalysed reaction is 1-(5-phospho-beta-D-ribosyl)-ATP + diphosphate = 5-phospho-alpha-D-ribose 1-diphosphate + ATP. It participates in amino-acid biosynthesis; L-histidine biosynthesis; L-histidine from 5-phospho-alpha-D-ribose 1-diphosphate: step 1/9. In terms of biological role, catalyzes the condensation of ATP and 5-phosphoribose 1-diphosphate to form N'-(5'-phosphoribosyl)-ATP (PR-ATP). Has a crucial role in the pathway because the rate of histidine biosynthesis seems to be controlled primarily by regulation of HisG enzymatic activity. In Deinococcus radiodurans (strain ATCC 13939 / DSM 20539 / JCM 16871 / CCUG 27074 / LMG 4051 / NBRC 15346 / NCIMB 9279 / VKM B-1422 / R1), this protein is ATP phosphoribosyltransferase (hisG).